An 84-amino-acid polypeptide reads, in one-letter code: Envelope small membrane protein (84 aa).

At 1–18 (MFMADAYFADTVWYVGQI) the chain is on the virion surface side. The chain crosses the membrane as a helical span at residues 19-39 (IFIVAICLLVIIVVVAFLATF). Topologically, residues 40-80 (KLCIQLCGMCNTLVLSPSIYVFNRGRQFYEFYNDVKPPVLD) are intravirion.

It belongs to the betacoronaviruses E protein family. Homopentamer. Interacts with membrane protein M in the budding compartment of the host cell, which is located between endoplasmic reticulum and the Golgi complex. Interacts with Nucleoprotein.

The protein resides in the host Golgi apparatus membrane. Functionally, plays a central role in virus morphogenesis and assembly. Acts as a viroporin and self-assembles in host membranes forming pentameric protein-lipid pores that allow ion transport. Also plays a role in the induction of apoptosis. In Bovine coronavirus (strain 98TXSF-110-ENT) (BCoV-ENT), this protein is Envelope small membrane protein.